We begin with the raw amino-acid sequence, 443 residues long: Chromosomal replication initiator protein DnaA (443 aa).

The tract at residues 1–76 (METKALWEKL…KSVLNSYVSV (76 aa)) is domain I, interacts with DnaA modulators. The segment at 76-99 (VDFLTKEIFEKNTKKENKKEPINT) is domain II. The interval 100–320 (VLSENALTFE…GLVNRLLFFG (221 aa)) is domain III, AAA+ region. 4 residues coordinate ATP: Gly-145, Gly-147, Lys-148, and Thr-149. Residues 321 to 443 (IQNDLGHIID…ESLKNEIIGK (123 aa)) are domain IV, binds dsDNA.

Belongs to the DnaA family. Oligomerizes as a right-handed, spiral filament on DNA at oriC.

It localises to the cytoplasm. Its function is as follows. Plays an essential role in the initiation and regulation of chromosomal replication. ATP-DnaA binds to the origin of replication (oriC) to initiate formation of the DNA replication initiation complex once per cell cycle. Binds the DnaA box (a 9 base pair repeat at the origin) and separates the double-stranded (ds)DNA. Forms a right-handed helical filament on oriC DNA; dsDNA binds to the exterior of the filament while single-stranded (ss)DNA is stabiized in the filament's interior. The ATP-DnaA-oriC complex binds and stabilizes one strand of the AT-rich DNA unwinding element (DUE), permitting loading of DNA polymerase. After initiation quickly degrades to an ADP-DnaA complex that is not apt for DNA replication. Binds acidic phospholipids. The sequence is that of Chromosomal replication initiator protein DnaA from Mesoplasma florum (strain ATCC 33453 / NBRC 100688 / NCTC 11704 / L1) (Acholeplasma florum).